We begin with the raw amino-acid sequence, 247 residues long: LHFPL tetraspan subfamily member 4 protein (247 aa).

Helical transmembrane passes span 22 to 42 (IGVL…VVFI), 97 to 117 (FFVL…SLFF), 127 to 147 (ICAW…MIFP), and 178 to 198 (ILAI…FVLG).

It belongs to the LHFP family. In terms of assembly, interacts with GABA(A) receptor subunits. Identified in a complex of 720 kDa composed of LHFPL4, NLGN2, GABRA1, GABRB2, GABRG2 and GABRB3. Interacts with GABRB3. Interacts with GABRA2. Interacts with GABRG2. Interacts with GABRA1. Interacts with NLGN2; leading to mutual regulation of protein level and synaptic clustering.

It is found in the cell projection. Its subcellular location is the dendrite. The protein resides in the postsynaptic cell membrane. Functionally, plays a role in the regulation of inhibitory synapse formation and function by being involved in maintening gamma-aminobutyric acid receptors (GABAARs) clustering and their associated scaffold proteins at inhibitory synaptic sites. Acts in concert with NLGN2 to recruit or stabilize GABAARs. The chain is LHFPL tetraspan subfamily member 4 protein from Homo sapiens (Human).